A 186-amino-acid polypeptide reads, in one-letter code: Adenine phosphoribosyltransferase (186 aa).

The protein belongs to the purine/pyrimidine phosphoribosyltransferase family. As to quaternary structure, homodimer.

Its subcellular location is the cytoplasm. It catalyses the reaction AMP + diphosphate = 5-phospho-alpha-D-ribose 1-diphosphate + adenine. The protein operates within purine metabolism; AMP biosynthesis via salvage pathway; AMP from adenine: step 1/1. Its function is as follows. Catalyzes a salvage reaction resulting in the formation of AMP, that is energically less costly than de novo synthesis. The protein is Adenine phosphoribosyltransferase of Xanthomonas oryzae pv. oryzae (strain PXO99A).